The chain runs to 289 residues: 33 kDa chaperonin (289 aa).

Intrachain disulfides connect Cys-235/Cys-237 and Cys-268/Cys-271.

The protein belongs to the HSP33 family. In terms of processing, under oxidizing conditions two disulfide bonds are formed involving the reactive cysteines. Under reducing conditions zinc is bound to the reactive cysteines and the protein is inactive.

The protein localises to the cytoplasm. In terms of biological role, redox regulated molecular chaperone. Protects both thermally unfolding and oxidatively damaged proteins from irreversible aggregation. Plays an important role in the bacterial defense system toward oxidative stress. The chain is 33 kDa chaperonin from Bacillus licheniformis (strain ATCC 14580 / DSM 13 / JCM 2505 / CCUG 7422 / NBRC 12200 / NCIMB 9375 / NCTC 10341 / NRRL NRS-1264 / Gibson 46).